A 263-amino-acid polypeptide reads, in one-letter code: uncharacterized protein (263 aa).

7 consecutive transmembrane segments (helical) span residues 1 to 21 (MLVI…ILCQ), 38 to 58 (LFLL…HYCY), 82 to 102 (IPIS…CMMV), 118 to 138 (GISI…IFTY), 151 to 171 (GKFG…ANLL), 196 to 216 (FALI…VIPT), and 230 to 250 (FWVK…VQYV).

It is found in the membrane. This is an uncharacterized protein from Saccharomyces cerevisiae (strain ATCC 204508 / S288c) (Baker's yeast).